A 465-amino-acid polypeptide reads, in one-letter code: UDP-N-acetylmuramate--L-alanine ligase (465 aa).

Gly112–Thr118 contributes to the ATP binding site.

Belongs to the MurCDEF family.

The protein localises to the cytoplasm. The catalysed reaction is UDP-N-acetyl-alpha-D-muramate + L-alanine + ATP = UDP-N-acetyl-alpha-D-muramoyl-L-alanine + ADP + phosphate + H(+). It participates in cell wall biogenesis; peptidoglycan biosynthesis. Its function is as follows. Cell wall formation. This chain is UDP-N-acetylmuramate--L-alanine ligase, found in Burkholderia ambifaria (strain ATCC BAA-244 / DSM 16087 / CCUG 44356 / LMG 19182 / AMMD) (Burkholderia cepacia (strain AMMD)).